Reading from the N-terminus, the 55-residue chain is Large ribosomal subunit protein bL33 (55 aa).

This sequence belongs to the bacterial ribosomal protein bL33 family.

In Hyphomonas neptunium (strain ATCC 15444), this protein is Large ribosomal subunit protein bL33.